A 284-amino-acid polypeptide reads, in one-letter code: Tropomyosin alpha-1 chain (284 aa).

The tract at residues 1–37 (MDAIKKKMQMLKLDKENALDRAEQAETDKKAAEERSK) is disordered. Residues 1 to 284 (MDAIKKKMQM…DHALNDMTSI (284 aa)) are a coiled coil. Basic and acidic residues predominate over residues 12–37 (KLDKENALDRAEQAETDKKAAEERSK).

The protein belongs to the tropomyosin family. Homodimer. Heterodimer of an alpha (TPM1, TPM3 or TPM4) and a beta (TPM2) chain.

Its subcellular location is the cytoplasm. It localises to the cytoskeleton. Its function is as follows. Binds to actin filaments in muscle and non-muscle cells. Plays a central role, in association with the troponin complex, in the calcium dependent regulation of vertebrate striated muscle contraction. Smooth muscle contraction is regulated by interaction with caldesmon. In non-muscle cells is implicated in stabilizing cytoskeleton actin filaments. In Danio rerio (Zebrafish), this protein is Tropomyosin alpha-1 chain (tpma).